The following is a 457-amino-acid chain: Adenylyltransferase and sulfurtransferase MOCS3 (457 aa).

The segment at 40-60 (ANGGGNGDGLADEGGERNTGT) is disordered. The residue at position 63 (Thr63) is a Phosphothreonine. ATP contacts are provided by residues Gly102, Asp123, 130–134 (SNFHR), Lys147, and 191–192 (DN). Residues Cys233 and Cys236 each coordinate Zn(2+). Cys250 serves as the catalytic Glycyl thioester intermediate; for adenylyltransferase activity. Zn(2+) contacts are provided by Cys309 and Cys312. The 98-residue stretch at 358 to 455 (ESQPHLLFDV…WTRKVDPDFP (98 aa)) folds into the Rhodanese domain. Catalysis depends on Cys414, which acts as the Cysteine persulfide intermediate; for sulfurtransferase activity.

The protein in the N-terminal section; belongs to the HesA/MoeB/ThiF family. UBA4 subfamily. Zn(2+) is required as a cofactor.

It localises to the cytoplasm. The protein localises to the cytosol. It carries out the reaction [molybdopterin-synthase sulfur-carrier protein]-C-terminal Gly-Gly + ATP + H(+) = [molybdopterin-synthase sulfur-carrier protein]-C-terminal Gly-Gly-AMP + diphosphate. The catalysed reaction is [molybdopterin-synthase sulfur-carrier protein]-C-terminal Gly-Gly-AMP + S-sulfanyl-L-cysteinyl-[cysteine desulfurase] + AH2 = [molybdopterin-synthase sulfur-carrier protein]-C-terminal-Gly-aminoethanethioate + L-cysteinyl-[cysteine desulfurase] + A + AMP + 2 H(+). It functions in the pathway tRNA modification; 5-methoxycarbonylmethyl-2-thiouridine-tRNA biosynthesis. Its pathway is cofactor biosynthesis; molybdopterin biosynthesis. Its function is as follows. Plays a central role in 2-thiolation of mcm(5)S(2)U at tRNA wobble positions of cytosolic tRNA(Lys), tRNA(Glu) and tRNA(Gln). Also essential during biosynthesis of the molybdenum cofactor. Acts by mediating the C-terminal thiocarboxylation of sulfur carriers URM1 and MOCS2A. Its N-terminus first activates URM1 and MOCS2A as acyl-adenylates (-COAMP), then the persulfide sulfur on the catalytic cysteine is transferred to URM1 and MOCS2A to form thiocarboxylation (-COSH) of their C-terminus. The reaction probably involves hydrogen sulfide that is generated from the persulfide intermediate and that acts as a nucleophile towards URM1 and MOCS2A. Subsequently, a transient disulfide bond is formed. Does not use thiosulfate as sulfur donor; NFS1 probably acting as a sulfur donor for thiocarboxylation reactions. The polypeptide is Adenylyltransferase and sulfurtransferase MOCS3 (Drosophila willistoni (Fruit fly)).